The primary structure comprises 249 residues: Green-light absorbing proteorhodopsin (249 aa).

Positions 1 to 17 (MKLLLILGSVIALPTFA) are cleaved as a signal peptide. The next 7 helical transmembrane spans lie at 30–49 (GVSF…FFFV), 62–84 (LTVS…GVWI), 99–121 (LLTV…NVAG), 128–147 (LVGS…GIMA), 151–168 (AFII…ELWA), 189–211 (MMYI…YLMG), and 221–243 (LIYN…NVAV). Lys231 carries the N6-(retinylidene)lysine modification.

The protein belongs to the archaeal/bacterial/fungal opsin family. Post-translationally, contains one covalently linked retinal chromophore.

The protein localises to the cell membrane. Functionally, light-driven proton pump that generates photothrophic energy. The polypeptide is Green-light absorbing proteorhodopsin (Gamma-proteobacterium EBAC31A08).